The sequence spans 439 residues: Dihydroorotase (439 aa).

Positions 65 and 67 each coordinate Zn(2+). Substrate contacts are provided by residues 67 to 69 (HFR) and N99. 4 residues coordinate Zn(2+): D156, H183, H246, and D321. The active site involves D321. Residues H325 and 339–340 (FG) each bind substrate.

The protein belongs to the metallo-dependent hydrolases superfamily. DHOase family. Class I DHOase subfamily. The cofactor is Zn(2+).

It catalyses the reaction (S)-dihydroorotate + H2O = N-carbamoyl-L-aspartate + H(+). Its pathway is pyrimidine metabolism; UMP biosynthesis via de novo pathway; (S)-dihydroorotate from bicarbonate: step 3/3. Its function is as follows. Catalyzes the reversible cyclization of carbamoyl aspartate to dihydroorotate. The protein is Dihydroorotase of Chlorobaculum tepidum (strain ATCC 49652 / DSM 12025 / NBRC 103806 / TLS) (Chlorobium tepidum).